The chain runs to 373 residues: Transaldolase (373 aa).

The active-site Schiff-base intermediate with substrate is Lys143.

Belongs to the transaldolase family. Type 2 subfamily.

The protein resides in the cytoplasm. It carries out the reaction D-sedoheptulose 7-phosphate + D-glyceraldehyde 3-phosphate = D-erythrose 4-phosphate + beta-D-fructose 6-phosphate. The protein operates within carbohydrate degradation; pentose phosphate pathway; D-glyceraldehyde 3-phosphate and beta-D-fructose 6-phosphate from D-ribose 5-phosphate and D-xylulose 5-phosphate (non-oxidative stage): step 2/3. In terms of biological role, transaldolase is important for the balance of metabolites in the pentose-phosphate pathway. This is Transaldolase (tal) from Mycobacterium bovis (strain ATCC BAA-935 / AF2122/97).